Consider the following 44-residue polypeptide: Cytochrome b559 subunit beta (44 aa).

A helical membrane pass occupies residues 17-41 (VRWLAVHTLAVPSVFFVGAIAAMQF). Heme contacts are provided by Arg18 and His23.

Belongs to the PsbE/PsbF family. As to quaternary structure, heterodimer of an alpha subunit and a beta subunit. PSII is composed of 1 copy each of membrane proteins PsbA, PsbB, PsbC, PsbD, PsbE, PsbF, PsbH, PsbI, PsbJ, PsbK, PsbL, PsbM, PsbT, PsbX, PsbY, PsbZ, Psb30/Ycf12, peripheral proteins PsbO, CyanoQ (PsbQ), PsbU, PsbV and a large number of cofactors. It forms dimeric complexes. Requires heme b as cofactor.

The protein resides in the cellular thylakoid membrane. In terms of biological role, this b-type cytochrome is tightly associated with the reaction center of photosystem II (PSII). PSII is a light-driven water:plastoquinone oxidoreductase that uses light energy to abstract electrons from H(2)O, generating O(2) and a proton gradient subsequently used for ATP formation. It consists of a core antenna complex that captures photons, and an electron transfer chain that converts photonic excitation into a charge separation. This Synechocystis sp. (strain ATCC 27184 / PCC 6803 / Kazusa) protein is Cytochrome b559 subunit beta.